Consider the following 301-residue polypeptide: Recombination-associated protein RdgC (301 aa).

Belongs to the RdgC family.

The protein localises to the cytoplasm. The protein resides in the nucleoid. In terms of biological role, may be involved in recombination. This Stenotrophomonas maltophilia (strain R551-3) protein is Recombination-associated protein RdgC.